The following is a 381-amino-acid chain: Molybdenum import ATP-binding protein ModC (381 aa).

Positions 5 to 238 (SRSIQAQFRG…PALPLAASRD (234 aa)) constitute an ABC transporter domain. 37 to 44 (GPSGCGKS) provides a ligand contact to ATP. Residues 297–367 (NTSILNVLPA…VKGVALAPGR (71 aa)) form the Mop domain.

This sequence belongs to the ABC transporter superfamily. Molybdate importer (TC 3.A.1.8) family. The complex is composed of two ATP-binding proteins (ModC), two transmembrane proteins (ModB) and a solute-binding protein (ModA).

It is found in the cell inner membrane. It catalyses the reaction molybdate(out) + ATP + H2O = molybdate(in) + ADP + phosphate + H(+). Functionally, part of the ABC transporter complex ModABC involved in molybdenum import. Responsible for energy coupling to the transport system. This chain is Molybdenum import ATP-binding protein ModC, found in Rhodopseudomonas palustris (strain BisB18).